Consider the following 123-residue polypeptide: Large ribosomal subunit protein uL24 (123 aa).

This sequence belongs to the universal ribosomal protein uL24 family. Part of the 50S ribosomal subunit.

Functionally, one of two assembly initiator proteins, it binds directly to the 5'-end of the 23S rRNA, where it nucleates assembly of the 50S subunit. Located at the polypeptide exit tunnel on the outside of the subunit. In Pyrobaculum islandicum (strain DSM 4184 / JCM 9189 / GEO3), this protein is Large ribosomal subunit protein uL24.